Reading from the N-terminus, the 362-residue chain is UDP-N-acetylglucosamine--N-acetylmuramyl-(pentapeptide) pyrophosphoryl-undecaprenol N-acetylglucosamine transferase (362 aa).

UDP-N-acetyl-alpha-D-glucosamine is bound by residues 15 to 17, N127, R165, S191, I247, 266 to 271, and Q292; these read TGG and ALTVSE.

Belongs to the glycosyltransferase 28 family. MurG subfamily.

The protein localises to the cell inner membrane. The enzyme catalyses di-trans,octa-cis-undecaprenyl diphospho-N-acetyl-alpha-D-muramoyl-L-alanyl-D-glutamyl-meso-2,6-diaminopimeloyl-D-alanyl-D-alanine + UDP-N-acetyl-alpha-D-glucosamine = di-trans,octa-cis-undecaprenyl diphospho-[N-acetyl-alpha-D-glucosaminyl-(1-&gt;4)]-N-acetyl-alpha-D-muramoyl-L-alanyl-D-glutamyl-meso-2,6-diaminopimeloyl-D-alanyl-D-alanine + UDP + H(+). Its pathway is cell wall biogenesis; peptidoglycan biosynthesis. Its function is as follows. Cell wall formation. Catalyzes the transfer of a GlcNAc subunit on undecaprenyl-pyrophosphoryl-MurNAc-pentapeptide (lipid intermediate I) to form undecaprenyl-pyrophosphoryl-MurNAc-(pentapeptide)GlcNAc (lipid intermediate II). In Shewanella putrefaciens (strain CN-32 / ATCC BAA-453), this protein is UDP-N-acetylglucosamine--N-acetylmuramyl-(pentapeptide) pyrophosphoryl-undecaprenol N-acetylglucosamine transferase.